Reading from the N-terminus, the 358-residue chain is Phospho-N-acetylmuramoyl-pentapeptide-transferase (358 aa).

9 helical membrane passes run 13-35 (LLILNTFALIATSYLFNNFIFIG), 81-101 (MGGVFMVIPFLIFLLIININL), 106-126 (LFLLLLTIFGFFITGFVDDFL), 142-162 (FFLQSIIAIIFIFLAYEKDLI), 171-191 (SWQINMNIFTLPISFLVLVGI), 201-221 (LDGLAAGCSGIVFYGLGTEIL), 228-248 (LIIFSILCYSMSGICLGFLKY), 268-290 (ILGSIALLTNSVFTLSIFSGIFI), and 336-356 (IVENFWKINILLVILGIVLKI).

The protein belongs to the glycosyltransferase 4 family. MraY subfamily. Mg(2+) is required as a cofactor.

The protein resides in the cell inner membrane. It catalyses the reaction UDP-N-acetyl-alpha-D-muramoyl-L-alanyl-gamma-D-glutamyl-meso-2,6-diaminopimeloyl-D-alanyl-D-alanine + di-trans,octa-cis-undecaprenyl phosphate = di-trans,octa-cis-undecaprenyl diphospho-N-acetyl-alpha-D-muramoyl-L-alanyl-D-glutamyl-meso-2,6-diaminopimeloyl-D-alanyl-D-alanine + UMP. Its pathway is cell wall biogenesis; peptidoglycan biosynthesis. Functionally, catalyzes the initial step of the lipid cycle reactions in the biosynthesis of the cell wall peptidoglycan: transfers peptidoglycan precursor phospho-MurNAc-pentapeptide from UDP-MurNAc-pentapeptide onto the lipid carrier undecaprenyl phosphate, yielding undecaprenyl-pyrophosphoryl-MurNAc-pentapeptide, known as lipid I. In Prochlorococcus marinus (strain MIT 9312), this protein is Phospho-N-acetylmuramoyl-pentapeptide-transferase.